Consider the following 467-residue polypeptide: Argininosuccinate lyase (467 aa).

This sequence belongs to the lyase 1 family. Argininosuccinate lyase subfamily.

It localises to the cytoplasm. It carries out the reaction 2-(N(omega)-L-arginino)succinate = fumarate + L-arginine. It participates in amino-acid biosynthesis; L-arginine biosynthesis; L-arginine from L-ornithine and carbamoyl phosphate: step 3/3. The protein is Argininosuccinate lyase of Anaeromyxobacter sp. (strain K).